The primary structure comprises 746 residues: Probably inactive copalyl diphosphate synthase 3 (746 aa).

The DXDD motif; degenerated signature appears at 331-334 (DVND).

The protein belongs to the terpene synthase family. Tpsc subfamily. As to expression, mostly expressed in stems, and, at low levels, in roots and leaves, but barely in flowers.

The polypeptide is Probably inactive copalyl diphosphate synthase 3 (Isodon rubescens (Rabdosia rubescens)).